We begin with the raw amino-acid sequence, 118 residues long: uncharacterized protein (118 aa).

This is an uncharacterized protein from Methanocaldococcus jannaschii (strain ATCC 43067 / DSM 2661 / JAL-1 / JCM 10045 / NBRC 100440) (Methanococcus jannaschii).